Reading from the N-terminus, the 363-residue chain is Oxygen-dependent coproporphyrinogen-III oxidase (363 aa).

A substrate-binding site is contributed by Ser-119. Positions 123 and 133 each coordinate a divalent metal cation. Catalysis depends on His-133, which acts as the Proton donor. 135-137 provides a ligand contact to substrate; the sequence is NYR. A divalent metal cation contacts are provided by His-167 and His-197. The segment at 287–322 is important for dimerization; sequence YVEFNLVWDRGTIFGLQTNGRTESILMSLPPLVRWE.

This sequence belongs to the aerobic coproporphyrinogen-III oxidase family. As to quaternary structure, homodimer. Requires a divalent metal cation as cofactor.

It is found in the cytoplasm. It carries out the reaction coproporphyrinogen III + O2 + 2 H(+) = protoporphyrinogen IX + 2 CO2 + 2 H2O. It participates in porphyrin-containing compound metabolism; protoporphyrin-IX biosynthesis; protoporphyrinogen-IX from coproporphyrinogen-III (O2 route): step 1/1. In terms of biological role, involved in the heme and chlorophyll biosynthesis. Catalyzes the aerobic oxidative decarboxylation of propionate groups of rings A and B of coproporphyrinogen-III to yield the vinyl groups in protoporphyrinogen-IX. This Parasynechococcus marenigrum (strain WH8102) protein is Oxygen-dependent coproporphyrinogen-III oxidase.